An 811-amino-acid polypeptide reads, in one-letter code: MEAARALRLLLVVCGCLALPPLAEPVCPERCDCQHPQHLLCTNRGLRVVPKTSSLPSPHDVLTYSLGGNFITNITAFDFHRLGQLRRLDLQYNQIRSLHPKTFEKLSRLEELYLGNNLLQALAPGTLAPLRKLRILYANGNEISRLSRGSFEGLESLVKLRLDGNALGALPDAVFAPLGNLLYLHLESNRIRFLGKNAFAQLGKLRFLNLSANELQPSLRHAATFAPLRSLSSLILSANNLQHLGPRIFQHLPRLGLLSLRGNQLTHLAPEAFWGLEALRELRLEGNRLSQLPTALLEPLHSLEALDLSGNELSALHPATFGHLGRLRELSLRNNALSALSGDIFAASPALYRLDLDGNGWTCDCRLRGLKRWMGDWHSQGRLLTVFVQCRHPPALRGKYLDYLDDQQLQNGSCADPSPSASLTADRRRQPLPTAAGEEMTPPAGLAEELPPQPQLQQQGRFLAGVAWDGAARELVGNRSALRLSRRGPGLQQPSPSVAAAAGPAPQSLDLHKKPQRGRPTRADPALAEPTPTASPGSAPSPAGDPWQRATKHRLGTEHQERAAQSDGGAGLPPLVSDPCDFNKFILCNLTVEAVGADSASVRWAVREHRSPRPLGGARFRLLFDRFGQQPKFHRFVYLPESSDSATLRELRGDTPYLVCVEGVLGGRVCPVAPRDHCAGLVTLPEAGSRGGVDYQLLTLALLTVNALLVLLALAAWASRWLRRKLRARRKGGAPVHVRHMYSTRRPLRSMGTGVSADFSGFQSHRPRTTVCALSEADLIEFPCDRFMDSAGGGAGGSLRREDRLLQRFAD.

Positions 1–25 are cleaved as a signal peptide; it reads MEAARALRLLLVVCGCLALPPLAEP. An LRRNT domain is found at 26–57; that stretch reads VCPERCDCQHPQHLLCTNRGLRVVPKTSSLPS. At 26 to 696 the chain is on the extracellular side; sequence VCPERCDCQH…AGSRGGVDYQ (671 aa). 12 LRR repeats span residues 61-81, 84-105, 108-129, 132-153, 156-177, 180-201, 204-223, 230-251, 254-275, 278-299, 302-323, and 326-347; these read VLTYSLGGNFITNITAFDFHR, QLRRLDLQYNQIRSLHPKTFEK, RLEELYLGNNLLQALAPGTLAP, KLRILYANGNEISRLSRGSFEG, SLVKLRLDGNALGALPDAVFAP, NLLYLHLESNRIRFLGKNAFAQ, KLRFLNLSANELQPSLRHAA, SLSSLILSANNLQHLGPRIFQH, RLGLLSLRGNQLTHLAPEAFWG, ALRELRLEGNRLSQLPTALLEP, SLEALDLSGNELSALHPATFGH, and RLRELSLRNNALSALSGDIFAA. The N-linked (GlcNAc...) asparagine glycan is linked to Asn73. Asn209 is a glycosylation site (N-linked (GlcNAc...) asparagine). An LRRCT domain is found at 359–416; that stretch reads NGWTCDCRLRGLKRWMGDWHSQGRLLTVFVQCRHPPALRGKYLDYLDDQQLQNGSCAD. The interval 484 to 549 is disordered; it reads LSRRGPGLQQ…PSPAGDPWQR (66 aa). Composition is skewed to low complexity over residues 492-508 and 530-544; these read QQPSPSVAAAAGPAPQS and PTPTASPGSAPSPAG. N-linked (GlcNAc...) asparagine glycosylation is present at Asn589. A helical membrane pass occupies residues 697–717; the sequence is LLTLALLTVNALLVLLALAAW. Over 718-811 the chain is Cytoplasmic; that stretch reads ASRWLRRKLR…EDRLLQRFAD (94 aa). A Phosphoserine modification is found at Ser798.

In terms of assembly, belongs to the lipopolysaccharide (LPS) receptor, a multi-protein complex containing at least CD14, MD-2 and TLR4. Interacts with TLR4; this interaction is greatly enhanced by LPS stimulation. Interacts with LPS. In terms of processing, N-glycolysaled. As to expression, highly expressed in the brain, ovary, small intestine and spleen.

It localises to the membrane. Functionally, component of the TLR4 signaling complex. Mediates the innate immune response to bacterial lipopolysaccharide (LPS) leading to cytokine secretion. In Homo sapiens (Human), this protein is TLR4 interactor with leucine rich repeats (TRIL).